Reading from the N-terminus, the 182-residue chain is Coiled-coil domain-containing protein 32 (182 aa).

Residues 1–10 (MMIDDFETHA) are compositionally biased toward basic and acidic residues. Disordered regions lie at residues 1 to 61 (MMID…FSPW) and 153 to 182 (PTQN…SPEK). The segment covering 153–167 (PTQNSETPASSSQTD) has biased composition (polar residues). Positions 172 to 182 (EEEEECPSPEK) are enriched in acidic residues.

In terms of assembly, associates with adaptor protein complex 2 (AP-2).

It localises to the membrane. The protein localises to the coated pit. In terms of biological role, regulates clathrin-mediated endocytsois of cargos such as transferrin probably through the association and modulation of adaptor protein complex 2 (AP-2). Has a role in ciliogenesis and is required for proper cephalic and left/right axis development. In Danio rerio (Zebrafish), this protein is Coiled-coil domain-containing protein 32.